The sequence spans 990 residues: A-type ATP synthase subunit B (990 aa).

The 124-residue stretch at 491-614 folds into the DOD-type homing endonuclease domain; it reads VAGLIASDGS…LQLLLKRLGV (124 aa).

The protein belongs to the ATPase alpha/beta chains family. Has multiple subunits with at least A(3), B(3), C, D, E, F, H, I and proteolipid K(x). In terms of processing, this protein undergoes a protein self splicing that involves a post-translational excision of the VDE intervening region (intein) followed by peptide ligation.

Its subcellular location is the cell membrane. Its function is as follows. Component of the A-type ATP synthase that produces ATP from ADP in the presence of a proton gradient across the membrane. The B chain is a regulatory subunit. The sequence is that of A-type ATP synthase subunit B from Methanopyrus kandleri (strain AV19 / DSM 6324 / JCM 9639 / NBRC 100938).